The following is a 161-amino-acid chain: Protein UXT homolog (161 aa).

It belongs to the UXT family.

In Dictyostelium discoideum (Social amoeba), this protein is Protein UXT homolog.